Consider the following 1577-residue polypeptide: Vacuolar protein sorting/targeting protein PEP1 (1577 aa).

The first 21 residues, 1 to 21 (MILLHFVYSLWALLLIPLINA), serve as a signal peptide directing secretion. The Lumenal portion of the chain corresponds to 22-1391 (EEFTPKVTKT…EFKEKYSVSA (1370 aa)). 2 BNR repeats span residues 58-68 (ISFDDGETWEK) and 101-111 (YITNDQGKSWE). N-linked (GlcNAc...) asparagine glycosylation is found at asparagine 121 and asparagine 168. BNR repeat units lie at residues 179–187 (SNDGGKSFS) and 414–423 (ISVDNGLTWT). A glycan (N-linked (GlcNAc...) asparagine) is linked at asparagine 445. 3 BNR repeats span residues 485–495 (FISRDGGLTWK), 531–541 (YYSLDQGKTWT), and 762–771 (YISHDGGQTI). Residue asparagine 791 is glycosylated (N-linked (GlcNAc...) asparagine). One copy of the BNR 8 repeat lies at 859–869 (YLTNDGGETFT). N-linked (GlcNAc...) asparagine glycosylation occurs at asparagine 1008. 2 BNR repeats span residues 1141 to 1150 (FFTTDGGETW) and 1183 to 1192 (YSTDFGKTWK). N-linked (GlcNAc...) asparagine glycosylation occurs at asparagine 1301. Residues 1392–1412 (GPFAFIFISILLIIFFAAWFV) form a helical membrane-spanning segment. Residues 1413–1577 (YDRGIRRNGG…DSTAPSNENQ (165 aa)) are Cytoplasmic-facing. Residues 1531–1577 (DDVPTLEEEHTSYTDQPTTTDVPDALPEGNEENIDRPDSTAPSNENQ) are disordered.

The protein belongs to the VPS10-related sortilin family.

The protein localises to the golgi apparatus. It localises to the trans-Golgi network membrane. Its subcellular location is the prevacuolar compartment membrane. Functions as a sorting receptor in the Golgi compartment required for the intracellular sorting and delivery of soluble vacuolar proteins, like carboxypeptidase Y (CPY) and proteinase A. Executes multiple rounds of sorting by cycling between the late Golgi and a prevacuolar endosome-like compartment. Binds the Golgi-modified P2 form of CPY, and this interaction is dependent on the presence of an intact CPY vacuolar protein sorting signal. This chain is Vacuolar protein sorting/targeting protein PEP1 (PEP1), found in Saccharomyces cerevisiae (strain Lalvin EC1118 / Prise de mousse) (Baker's yeast).